The sequence spans 1751 residues: Non-reducing polyketide synthase afvB (1751 aa).

The interval 19-249 (FRRLRLHSKC…PLPVYGGPCH (231 aa)) is N-terminal acylcarrier protein transacylase domain (SAT). The 431-residue stretch at 381 to 811 (HEKIAVIGMS…GGNTSLLLEE (431 aa)) folds into the Ketosynthase family 3 (KS3) domain. Catalysis depends on for beta-ketoacyl synthase activity residues C554, H689, and H730. A malonyl-CoA:ACP transacylase (MAT) domain region spans residues 910-1228 (FVFSGQGSFS…SMSALHSAGV (319 aa)). Residues 1291–1607 (TALVHHILEE…PRILMSRFFD (317 aa)) form a product template (PT) domain region. The segment at 1295-1429 (HHILEESFGK…GVVTCGDSHS (135 aa)) is N-terminal hotdog fold. In terms of domain architecture, PKS/mFAS DH spans 1295 to 1603 (HHILEESFGK…LRPLPRILMS (309 aa)). Residue H1327 is the Proton acceptor; for dehydratase activity of the active site. The C-terminal hotdog fold stretch occupies residues 1456 to 1603 (LASRVSKDLV…LRPLPRILMS (148 aa)). The Proton donor; for dehydratase activity role is filled by D1514. Positions 1610-1670 (DSQYGQMAQQ…KAPISGSWPN (61 aa)) are disordered. Positions 1612 to 1657 (QYGQMAQQEPSTALPSTPQHTSSAKTTESTPSQQDESDNTSLATPE) are enriched in polar residues. Residues 1670–1747 (NANSQLVRDA…DLKAYLEGNQ (78 aa)) form the Carrier domain. S1707 carries the post-translational modification O-(pantetheine 4'-phosphoryl)serine.

It depends on pantetheine 4'-phosphate as a cofactor. As to expression, expressed mainly in sclerotia, with expression levels 20-fold and 10-fold greater than the expression levels of this gene found in mycelium and conidia, respectively.

The protein operates within secondary metabolite biosynthesis. In terms of biological role, non-reducing polyketide synthase (NRPKS); part of the gene cluster that mediates the biosynthesis of aflavarin, a bicoumarin that exhibits anti-insectan activity against the fungivorous beetle C.hemipterus. Catalyzes the formation of the aromatic polyketide from acetyl coenzyme A and seven malonyl coenzyme A molecules. This is Non-reducing polyketide synthase afvB from Aspergillus flavus (strain ATCC 200026 / FGSC A1120 / IAM 13836 / NRRL 3357 / JCM 12722 / SRRC 167).